A 490-amino-acid chain; its full sequence is Sushi domain-containing protein 4 (490 aa).

Residues 1–20 (MYHGMNPSNGDGFLEQQLQQ) form a disordered region. The first 41 residues, 1 to 41 (MYHGMNPSNGDGFLEQQLQQQQPQSPQRLLAVILWFQLALC), serve as a signal peptide directing secretion. Topologically, residues 42–319 (FGPAQLTGGF…PSTHETLLTT (278 aa)) are extracellular. Sushi domains are found at residues 55-119 (NVCA…VCIQ), 120-179 (EDCR…ICQG), 178-239 (QGCL…RCLA), and 241-304 (EVCP…YCIK). Cystine bridges form between Cys57-Cys99, Cys85-Cys117, Cys122-Cys165, Cys147-Cys177, Cys180-Cys224, Cys210-Cys237, Cys243-Cys289, and Cys274-Cys302. N-linked (GlcNAc...) asparagine glycosylation is found at Asn104 and Asn134. A glycan (N-linked (GlcNAc...) asparagine) is linked at Asn192. Residues 320–340 (WKIVAFTATSVLLVLLLVILA) form a helical membrane-spanning segment. The Cytoplasmic portion of the chain corresponds to 341 to 490 (RMFQTKFKAH…DEIPLMEEDP (150 aa)). Residues 394–490 (YPASVGQGCP…DEIPLMEEDP (97 aa)) are disordered. Composition is skewed to polar residues over residues 430-444 (CDST…QSLY) and 461-475 (DTIS…STSP). Positions 479 to 490 (IADEIPLMEEDP) are enriched in acidic residues.

High expression in brain and eye, with weaker expression in spinal cord and testis. Detected in white matter of brain and in the outer segments of photoreceptors.

It localises to the membrane. Its function is as follows. Acts as a complement inhibitor by disrupting the formation of the classical C3 convertase. Isoform 3 inhibits the classical complement pathway, while membrane-bound isoform 1 inhibits deposition of C3b via both the classical and alternative complement pathways. The sequence is that of Sushi domain-containing protein 4 (Susd4) from Mus musculus (Mouse).